A 328-amino-acid chain; its full sequence is Arabinose 5-phosphate isomerase KdsD (328 aa).

The SIS domain maps to 42–184 (CEKMFWCKGK…AVALLKARGF (143 aa)). Residues 75-76 (GT), histidine 82, histidine 88, 114-123 (ALIPVLKRLH), 148-150 (KVA), threonine 222, and aspartate 275 contribute to the substrate site. Histidine 82 provides a ligand contact to Zn(2+). In terms of domain architecture, CBS 1 spans 210 to 268 (MHTGDEIPHVKKTASLRDALLEVTRKNLGMTVICDDNMMIEGIFTDGDLRRVFDMGVDV). Positions 277 to 328 (MTPGGIRVRPGILAVEALNLMQSRHITSVMVADGDHLLGVLHMHDLLRAGVV) constitute a CBS 2 domain.

This sequence belongs to the SIS family. GutQ/KpsF subfamily. In terms of assembly, homotetramer.

It carries out the reaction D-arabinose 5-phosphate = D-ribulose 5-phosphate. The protein operates within carbohydrate biosynthesis; 3-deoxy-D-manno-octulosonate biosynthesis; 3-deoxy-D-manno-octulosonate from D-ribulose 5-phosphate: step 1/3. It functions in the pathway bacterial outer membrane biogenesis; lipopolysaccharide biosynthesis. With respect to regulation, completely inhibited by 10 uM of nickel, copper, cadmium and mercury ions. Inhibited by zinc with an IC(50) of 1-3 uM. Metal ion inhibition may be a mechanism to control activity in vivo. Involved in the biosynthesis of 3-deoxy-D-manno-octulosonate (KDO), a unique 8-carbon sugar component of lipopolysaccharides (LPSs). KdsD is not essential in the KDO biosynthesis and can be substituted by GutQ. Catalyzes the reversible aldol-ketol isomerization between D-ribulose 5-phosphate (Ru5P) and D-arabinose 5-phosphate (A5P). This chain is Arabinose 5-phosphate isomerase KdsD (kdsD), found in Escherichia coli (strain K12).